Reading from the N-terminus, the 167-residue chain is Dihydrofolate reductase (167 aa).

The region spanning 1 to 162 is the DHFR domain; it reads MFISMWAQDK…YPHRFQKWQK (162 aa). NADP(+) is bound by residues A7 and 13-19; that span reads LIGKDGL. D27 serves as a coordination point for substrate. NADP(+) is bound at residue 45 to 46; sequence KT. R58 provides a ligand contact to substrate. Residues 64–65 and 99–106 contribute to the NADP(+) site; these read TT and GGSRIFQA. Position 117 (T117) interacts with substrate.

Belongs to the dihydrofolate reductase family.

The enzyme catalyses (6S)-5,6,7,8-tetrahydrofolate + NADP(+) = 7,8-dihydrofolate + NADPH + H(+). It functions in the pathway cofactor biosynthesis; tetrahydrofolate biosynthesis; 5,6,7,8-tetrahydrofolate from 7,8-dihydrofolate: step 1/1. Functionally, key enzyme in folate metabolism. Catalyzes an essential reaction for de novo glycine and purine synthesis, and for DNA precursor synthesis. This Enterococcus faecium (Streptococcus faecium) protein is Dihydrofolate reductase (folA).